A 228-amino-acid polypeptide reads, in one-letter code: Lipoprotein-releasing system ATP-binding protein LolD (228 aa).

In terms of domain architecture, ABC transporter spans 7–227; sequence LQLSGIERHY…TIEDGKVVEL (221 aa). 43–50 serves as a coordination point for ATP; it reads APSGTGKS.

This sequence belongs to the ABC transporter superfamily. Lipoprotein translocase (TC 3.A.1.125) family. The complex is composed of two ATP-binding proteins (LolD) and two transmembrane proteins (LolC and LolE).

Its subcellular location is the cell inner membrane. Functionally, part of the ABC transporter complex LolCDE involved in the translocation of mature outer membrane-directed lipoproteins, from the inner membrane to the periplasmic chaperone, LolA. Responsible for the formation of the LolA-lipoprotein complex in an ATP-dependent manner. The sequence is that of Lipoprotein-releasing system ATP-binding protein LolD from Rhizobium meliloti (strain 1021) (Ensifer meliloti).